The sequence spans 320 residues: MPEARSSGPDLTRWRKQQQPVRRTVSQVCPPPRRPLTVADIRSGMENERLGVVRDSMFQNPLIVKAAGPASVGTSYSVYDSSAVQKVIPSLAGHHIKGGPQAELGKPRERSYSLPGINFNYGLYIRGLDGGVPEAIGRWNVFKQQPTCPHELTRNYIAMNRGAVKAGLVTARENLLYRQLNDIRISDQDDRRMKKEPPPLPPNMTFGIRARPSTPFFDLLQHRYLQLWVQEQKATQKAIKLEKKQKVVLGKLYETRSSQLRKYKPPVKLDTLWHMPHFQKVGRHLDTFPTEADRQRALKAHREECAVRQGTLRMGNYTHP.

The disordered stretch occupies residues 1–27; it reads MPEARSSGPDLTRWRKQQQPVRRTVSQ. Positions 17-27 are enriched in polar residues; it reads QQQPVRRTVSQ.

The protein belongs to the CFAP77 family. In terms of assembly, microtubule inner protein component of sperm flagellar doublet microtubules. As to expression, expressed in airway epithelial cells.

The protein resides in the cytoplasm. It is found in the cytoskeleton. The protein localises to the cilium axoneme. It localises to the flagellum axoneme. In terms of biological role, microtubule inner protein (MIP) part of the dynein-decorated doublet microtubules (DMTs) in cilia axoneme, which is required for motile cilia beating. This is Cilia- and flagella-associated protein 77 from Homo sapiens (Human).